We begin with the raw amino-acid sequence, 404 residues long: Phosphopentomutase (404 aa).

Mn(2+)-binding residues include Asp10, Asp303, His308, Asp344, His345, and His356.

Belongs to the phosphopentomutase family. It depends on Mn(2+) as a cofactor.

Its subcellular location is the cytoplasm. It carries out the reaction 2-deoxy-alpha-D-ribose 1-phosphate = 2-deoxy-D-ribose 5-phosphate. It catalyses the reaction alpha-D-ribose 1-phosphate = D-ribose 5-phosphate. The protein operates within carbohydrate degradation; 2-deoxy-D-ribose 1-phosphate degradation; D-glyceraldehyde 3-phosphate and acetaldehyde from 2-deoxy-alpha-D-ribose 1-phosphate: step 1/2. In terms of biological role, isomerase that catalyzes the conversion of deoxy-ribose 1-phosphate (dRib-1-P) and ribose 1-phosphate (Rib-1-P) to deoxy-ribose 5-phosphate (dRib-5-P) and ribose 5-phosphate (Rib-5-P), respectively. The protein is Phosphopentomutase of Shewanella putrefaciens (strain CN-32 / ATCC BAA-453).